Here is a 517-residue protein sequence, read N- to C-terminus: Ribonuclease Y (517 aa).

The chain crosses the membrane as a helical span at residues 1–21 (MIESLIALIAAIVGLGIGYLV). A KH domain is found at 207-273 (LINVINIKND…TKVIELLVED (67 aa)). The HD domain maps to 333-426 (ALAHSLEVAH…VCAADTLSAA (94 aa)).

It belongs to the RNase Y family.

The protein resides in the cell membrane. Its function is as follows. Endoribonuclease that initiates mRNA decay. The sequence is that of Ribonuclease Y from Campylobacter jejuni subsp. doylei (strain ATCC BAA-1458 / RM4099 / 269.97).